Here is a 413-residue protein sequence, read N- to C-terminus: 5'-deoxyadenosine deaminase (413 aa).

The Zn(2+) site is built by His-57 and His-59. Positions 86 and 171 each coordinate substrate. His-198 lines the Zn(2+) pocket. Substrate is bound by residues Glu-201 and Asp-286. Asp-286 contributes to the Zn(2+) binding site.

Belongs to the metallo-dependent hydrolases superfamily. MTA/SAH deaminase family. As to quaternary structure, homotetramer. Zn(2+) serves as cofactor.

The catalysed reaction is 5'-deoxyadenosine + H2O + H(+) = 5'-deoxyinosine + NH4(+). It catalyses the reaction S-adenosyl-L-homocysteine + H2O + H(+) = S-inosyl-L-homocysteine + NH4(+). The enzyme catalyses S-methyl-5'-thioadenosine + H2O + H(+) = S-methyl-5'-thioinosine + NH4(+). It carries out the reaction adenosine + H2O + H(+) = inosine + NH4(+). The protein operates within amino-acid biosynthesis; S-adenosyl-L-methionine biosynthesis. Functionally, catalyzes the deamination of three SAM-derived enzymatic products, namely 5'-deoxyadenosine, S-adenosyl-L-homocysteine, and 5'-methylthioadenosine, to produce the inosine analogs. Can also deaminate adenosine. The preferred substrate for this enzyme is 5'-deoxyadenosine, but all these substrates are efficiently deaminated. Likely functions in a S-adenosyl-L-methionine (SAM) recycling pathway from S-adenosyl-L-homocysteine (SAH) produced from SAM-dependent methylation reactions. May also be involved in the recycling of 5'-deoxyadenosine, whereupon the 5'-deoxyribose moiety of 5'-deoxyinosine is further metabolized to deoxyhexoses used for the biosynthesis of aromatic amino acids in methanogens. The sequence is that of 5'-deoxyadenosine deaminase from Methanothrix thermoacetophila (strain DSM 6194 / JCM 14653 / NBRC 101360 / PT) (Methanosaeta thermophila).